The sequence spans 396 residues: Protein nipi-4 (396 aa).

Residues 1 to 20 (MELDHTPPPSVLNDNCSASY) are Extracellular-facing. N-linked (GlcNAc...) asparagine glycosylation is present at asparagine 15. Residues 21 to 41 (MTPYATVIAMSGLYLLAIFYF) traverse the membrane as a helical segment. The Cytoplasmic portion of the chain corresponds to 42–396 (CKKSKKMCQP…EHHCQSVIHY (355 aa)). One can recognise a Protein kinase domain in the interval 81–368 (EVDDFQIGQT…SRLSELHHIV (288 aa)). ATP-binding positions include 87–95 (IGQTADGFI) and lysine 111.

The protein belongs to the protein kinase superfamily. Tyr protein kinase family. In terms of tissue distribution, expressed in the epidermis of larvae and adults and in vulval and rectal cells.

The protein resides in the membrane. Pseudokinase which plays a role in resistance to fungal infection by promoting expression of antimicrobial peptides (nlp-29, nlp-31, nlp-34, cnc-1, cnc-2 and cnc-4) in the epidermis. In addition, up-regulates nlp-29 expression upon physical wounding and in response to phorbol ester PMA treatment. This Caenorhabditis elegans protein is Protein nipi-4.